The chain runs to 2161 residues: SH3 and multiple ankyrin repeat domains protein 1 (2161 aa).

The interval 1 to 53 (MTHSPATSEDEERHSASECPEGGSESDSSPDGPGRGPRGTRGQGSGAPGSLAS) is disordered. Positions 17 to 32 (SECPEGGSESDSSPDG) are enriched in low complexity. Over residues 33-47 (PGRGPRGTRGQGSGA) the composition is skewed to gly residues. Tyr186 carries the phosphotyrosine modification. ANK repeat units follow at residues 212–245 (SGET…FRAR), 246–278 (DGMT…YKDR), 279–312 (RGLT…IADE), 313–345 (NGWQ…AQNA), 346–378 (SGNT…VKNN), and 379–395 (NGQT…NFEL). 2 disordered regions span residues 412 to 433 (ESPK…VPPA) and 455 to 546 (GAAS…SRGR). Residues 455 to 479 (GAASSGAPGPTSGSQGQSQPSAPTT) are compositionally biased toward low complexity. The segment covering 527–542 (PAGGTGGSGGPGGSLG) has biased composition (gly residues). Residue Ser540 is modified to Phosphoserine. Arg544 bears the Omega-N-methylarginine mark. An SH3 domain is found at 554–613 (VPGRSFMAVKSYQAQAEGEISLSKGEKIKVLSIGEGGFWEGQVKGRVGWFPSDCLEEVAN). The 95-residue stretch at 663 to 757 (TVLLQKKDSE…TLMVKVVMVT (95 aa)) folds into the PDZ domain. Phosphoserine is present on residues Ser671 and Ser791. Positions 832 to 886 (TISASESPGPGGLASLGKHRPKGFFATESSFDPHHRAQPSYERPSFLPPGPGLML) are disordered. A Phosphoserine modification is found at Ser890. 7 disordered regions span residues 909–1229 (SRSL…LDFT), 1241–1289 (RREG…KSID), 1353–1720 (LGLA…GVAS), 1734–1785 (GQAF…PTSP), 1827–1860 (LPTA…QPQA), 1892–1983 (PWAR…TRHL), and 1996–2023 (RRAP…LPIL). A compositionally biased stretch (pro residues) spans 920–939 (IPPPPTTSPPEPPYSTPPVP). Arg950 bears the Omega-N-methylarginine mark. Residues 996–1020 (AHHHPPHHHHHHAPPPQPHHHHAHP) show a composition bias toward basic residues. Residues Arg1051, Arg1090, and Arg1101 each carry the omega-N-methylarginine modification. Residues 1127 to 1144 (PPAPSPTSPASPQPPPAV) are compositionally biased toward pro residues. A compositionally biased stretch (low complexity) spans 1164-1181 (STSSSGRSSQGSSTEAEP). Residues 1199-1220 (SPAPAMSPVPPSPSPVPTPASP) show a composition bias toward pro residues. Residues 1241-1252 (RREGGWQNEARR) show a composition bias toward basic and acidic residues. Arg1253 is subject to Asymmetric dimethylarginine. A Phosphoserine modification is found at Ser1287. Over residues 1359 to 1368 (ARERALKESS) the composition is skewed to basic and acidic residues. The span at 1374–1391 (PQPPPRPPSPRYEAPPPT) shows a compositional bias: pro residues. Residue Arg1423 is modified to Omega-N-methylarginine. Phosphoserine is present on Ser1436. Composition is skewed to pro residues over residues 1517 to 1532 (GVPP…PSPT) and 1583 to 1609 (PLTP…PPPA). The segment covering 1618–1636 (DSTASSLTSYDSEVATLTQ) has biased composition (polar residues). A compositionally biased stretch (pro residues) spans 1644-1670 (DPHPPGPPAPAAPAPAAPQPGPDPPPG). The segment covering 1678–1688 (VDSRSSSDHPL) has biased composition (basic and acidic residues). A compositionally biased stretch (low complexity) spans 1692–1702 (SSASTLSSLSA). Composition is skewed to gly residues over residues 1703–1718 (EGGG…GAGV) and 1764–1774 (ASGGLRPGPSG). The segment covering 1775-1785 (GLRDPVTPTSP) has biased composition (low complexity). Pro residues predominate over residues 1844–1855 (PGPPPPPLPGPL). The residue at position 1895 (Arg1895) is an Omega-N-methylarginine. 3 stretches are compositionally biased toward low complexity: residues 1917–1940 (SSLQ…VSSL), 1954–1980 (TGTG…STST), and 1996–2006 (RRAPSPSLLPA). 3 positions are modified to omega-N-methylarginine: Arg2016, Arg2036, and Arg2074. The region spanning 2098-2161 (WTKFDVADWL…DRALKFFLER (64 aa)) is the SAM domain.

This sequence belongs to the SHANK family. As to quaternary structure, may homomultimerize via its SAM domain. Interacts with the C-terminus of SSTR2 via the PDZ domain. Interacts with IGSF9, SHARPIN, SPTAN1, HOMER1 and DLGAP1/GKAP isoforms 1 and 2. Part of a complex with DLG4/PSD-95 and DLGAP1/GKAP. Interacts with BAIAP2. Interacts with HOMER1 and HOMER3. In terms of tissue distribution, expressed in brain particularly in the amygdala, hippocampus, substantia nigra and thalamus. Isoform 2 seems to be expressed ubiquitously.

It is found in the cytoplasm. Its subcellular location is the postsynaptic density. The protein localises to the synapse. Seems to be an adapter protein in the postsynaptic density (PSD) of excitatory synapses that interconnects receptors of the postsynaptic membrane including NMDA-type and metabotropic glutamate receptors via complexes with GKAP/PSD-95 and Homer, respectively, and the actin-based cytoskeleton. Plays a role in the structural and functional organization of the dendritic spine and synaptic junction. This chain is SH3 and multiple ankyrin repeat domains protein 1 (SHANK1), found in Homo sapiens (Human).